Here is a 346-residue protein sequence, read N- to C-terminus: GTPase Obg (346 aa).

The Obg domain maps to 1–158; sequence MFIDKAKIYV…RWIELELKLL (158 aa). Residues 159–330 form the OBG-type G domain; it reads ADVGIIGFPN…LINLIRETRD (172 aa). GTP-binding positions include 165–172, 190–194, 212–215, 282–285, and 311–313; these read GFPNAGKS, FTTLT, DIPG, NKID, and SLI. Positions 172 and 192 each coordinate Mg(2+).

This sequence belongs to the TRAFAC class OBG-HflX-like GTPase superfamily. OBG GTPase family. As to quaternary structure, monomer. Mg(2+) serves as cofactor.

It is found in the cytoplasm. Functionally, an essential GTPase which binds GTP, GDP and possibly (p)ppGpp with moderate affinity, with high nucleotide exchange rates and a fairly low GTP hydrolysis rate. Plays a role in control of the cell cycle, stress response, ribosome biogenesis and in those bacteria that undergo differentiation, in morphogenesis control. This is GTPase Obg from Sulfurihydrogenibium sp. (strain YO3AOP1).